Reading from the N-terminus, the 310-residue chain is Methionyl-tRNA formyltransferase (310 aa).

A (6S)-5,6,7,8-tetrahydrofolate-binding site is contributed by 109-112 (SLLP).

Belongs to the Fmt family.

The catalysed reaction is L-methionyl-tRNA(fMet) + (6R)-10-formyltetrahydrofolate = N-formyl-L-methionyl-tRNA(fMet) + (6S)-5,6,7,8-tetrahydrofolate + H(+). Its function is as follows. Attaches a formyl group to the free amino group of methionyl-tRNA(fMet). The formyl group appears to play a dual role in the initiator identity of N-formylmethionyl-tRNA by promoting its recognition by IF2 and preventing the misappropriation of this tRNA by the elongation apparatus. The sequence is that of Methionyl-tRNA formyltransferase from Pseudomonas paraeruginosa (strain DSM 24068 / PA7) (Pseudomonas aeruginosa (strain PA7)).